A 329-amino-acid polypeptide reads, in one-letter code: Ribose-phosphate pyrophosphokinase B (329 aa).

Residues D131, H133, and E146 each coordinate Mg(2+). Residues 227 to 242 (TGKIAIIIDDIADTCK) form a binding of phosphoribosylpyrophosphate region.

Belongs to the ribose-phosphate pyrophosphokinase family. Requires Mg(2+) as cofactor.

The protein localises to the cytoplasm. The catalysed reaction is D-ribose 5-phosphate + ATP = 5-phospho-alpha-D-ribose 1-diphosphate + AMP + H(+). It functions in the pathway metabolic intermediate biosynthesis; 5-phospho-alpha-D-ribose 1-diphosphate biosynthesis; 5-phospho-alpha-D-ribose 1-diphosphate from D-ribose 5-phosphate (route I): step 1/1. The chain is Ribose-phosphate pyrophosphokinase B (prsB) from Dictyostelium discoideum (Social amoeba).